Here is a 63-residue protein sequence, read N- to C-terminus: MTETAQAPLDPRLLSVLVCPVTKGPLIYDREAGELISRQAGLAFPIRDGIPIMLPDEARPLDV.

It belongs to the UPF0434 family.

This is UPF0434 protein GDI0182/Gdia_2252 from Gluconacetobacter diazotrophicus (strain ATCC 49037 / DSM 5601 / CCUG 37298 / CIP 103539 / LMG 7603 / PAl5).